The sequence spans 352 residues: Ion-translocating oxidoreductase complex subunit D (352 aa).

Helical transmembrane passes span 20–40, 42–62, 89–109, and 123–143; these read IMLL…CFFG, GTLV…ALVL, IPPL…VIIA, and PAMI…TSWL. Thr187 is modified (FMN phosphoryl threonine). 5 helical membrane passes run 215-235, 242-262, 267-287, 301-321, and 322-342; these read LAGA…VWLL, WHIP…GWLF, LAAP…FFIL, LIFG…GGYP, and DGVA…DYYT.

It belongs to the NqrB/RnfD family. As to quaternary structure, the complex is composed of six subunits: RsxA, RsxB, RsxC, RsxD, RsxE and RsxG. It depends on FMN as a cofactor.

The protein resides in the cell inner membrane. Part of a membrane-bound complex that couples electron transfer with translocation of ions across the membrane. Required to maintain the reduced state of SoxR. The chain is Ion-translocating oxidoreductase complex subunit D from Escherichia coli O7:K1 (strain IAI39 / ExPEC).